Consider the following 346-residue polypeptide: N-acetyl-gamma-glutamyl-phosphate reductase (346 aa).

Residue Cys150 is part of the active site.

The protein belongs to the NAGSA dehydrogenase family. Type 1 subfamily.

It localises to the cytoplasm. It catalyses the reaction N-acetyl-L-glutamate 5-semialdehyde + phosphate + NADP(+) = N-acetyl-L-glutamyl 5-phosphate + NADPH + H(+). Its pathway is amino-acid biosynthesis; L-arginine biosynthesis; N(2)-acetyl-L-ornithine from L-glutamate: step 3/4. Catalyzes the NADPH-dependent reduction of N-acetyl-5-glutamyl phosphate to yield N-acetyl-L-glutamate 5-semialdehyde. The chain is N-acetyl-gamma-glutamyl-phosphate reductase from Moorella thermoacetica (strain ATCC 39073 / JCM 9320).